A 293-amino-acid polypeptide reads, in one-letter code: G1/S-specific cyclin-D3 (293 aa).

One can recognise a Cyclin N-terminal domain in the interval 27–152 (VLQSLLRLEE…LVLGKLKWDL (126 aa)). Residues 257-293 (REAAQTAPSPVPKAPGGSSSQGPSQTSTPTDVTAIHL) are disordered. A phosphoserine mark is found at serine 265 and serine 280. Over residues 271–286 (PGGSSSQGPSQTSTPT) the composition is skewed to low complexity. Residue threonine 284 is modified to Phosphothreonine.

It belongs to the cyclin family. Cyclin D subfamily. In terms of assembly, interacts with the CDK4 and CDK6 protein kinases to form a serine/threonine kinase holoenzyme complex. The cyclin subunit imparts substrate specificity to the complex. Interacts with ATF5. Interacts with EIF3K. Component of the ternary complex cyclin D/CDK4/CDKN1B required for nuclear translocation and modulation of CDK4-mediated kinase activity. Can form similar complexes with either CDKN1A or CDKN2A. Phosphorylation at Thr-284 by MAP kinases is required for ubiquitination and degradation by the DCX(AMBRA1) complex. Post-translationally, ubiquitinated by the DCX(AMBRA1) complex during the transition from G1 to S cell phase, leading to its degradation: ubiquitination is dependent on Thr-284 phosphorylation. The DCX(AMBRA1) complex represents the major regulator of CCND3 stability during the G1/S transition. Polyubiquitinated by the SCF(FBXL2) complex, leading to proteasomal degradation.

The protein resides in the nucleus. The protein localises to the cytoplasm. Regulatory component of the cyclin D3-CDK4 (DC) complex that phosphorylates and inhibits members of the retinoblastoma (RB) protein family including RB1 and regulates the cell-cycle during G(1)/S transition. Phosphorylation of RB1 allows dissociation of the transcription factor E2F from the RB/E2F complex and the subsequent transcription of E2F target genes which are responsible for the progression through the G(1) phase. Hypophosphorylates RB1 in early G(1) phase. Cyclin D-CDK4 complexes are major integrators of various mitogenenic and antimitogenic signals. Component of the ternary complex, cyclin D3/CDK4/CDKN1B, required for nuclear translocation and activity of the cyclin D-CDK4 complex. Shows transcriptional coactivator activity with ATF5 independently of CDK4. This chain is G1/S-specific cyclin-D3, found in Rattus norvegicus (Rat).